Here is a 416-residue protein sequence, read N- to C-terminus: Bifunctional protein GlmU (416 aa).

The pyrophosphorylase stretch occupies residues 1–229 (MTNYAIILAA…FNESLGVNDR (229 aa)). Residues 8–11 (LAAG), Lys22, Gln72, and 77–78 (GT) contribute to the UDP-N-acetyl-alpha-D-glucosamine site. A Mg(2+)-binding site is contributed by Asp102. UDP-N-acetyl-alpha-D-glucosamine is bound by residues Gly139, Glu154, Asn169, and Asn227. Position 227 (Asn227) interacts with Mg(2+). The linker stretch occupies residues 230–250 (VALATAETVMRQRITQKHMVN). An N-acetyltransferase region spans residues 251–416 (GVTFQNPETV…DSHCTFGSWR (166 aa)). UDP-N-acetyl-alpha-D-glucosamine is bound by residues Arg332 and Lys350. His362 acts as the Proton acceptor in catalysis. 2 residues coordinate UDP-N-acetyl-alpha-D-glucosamine: Tyr365 and Asn376. Residues Ala379 and 385 to 386 (NY) each bind acetyl-CoA.

The protein in the N-terminal section; belongs to the N-acetylglucosamine-1-phosphate uridyltransferase family. This sequence in the C-terminal section; belongs to the transferase hexapeptide repeat family. In terms of assembly, homotrimer. Requires Mg(2+) as cofactor.

The protein localises to the cytoplasm. The enzyme catalyses alpha-D-glucosamine 1-phosphate + acetyl-CoA = N-acetyl-alpha-D-glucosamine 1-phosphate + CoA + H(+). It catalyses the reaction N-acetyl-alpha-D-glucosamine 1-phosphate + UTP + H(+) = UDP-N-acetyl-alpha-D-glucosamine + diphosphate. Its pathway is nucleotide-sugar biosynthesis; UDP-N-acetyl-alpha-D-glucosamine biosynthesis; N-acetyl-alpha-D-glucosamine 1-phosphate from alpha-D-glucosamine 6-phosphate (route II): step 2/2. The protein operates within nucleotide-sugar biosynthesis; UDP-N-acetyl-alpha-D-glucosamine biosynthesis; UDP-N-acetyl-alpha-D-glucosamine from N-acetyl-alpha-D-glucosamine 1-phosphate: step 1/1. It functions in the pathway bacterial outer membrane biogenesis; LPS lipid A biosynthesis. Its function is as follows. Catalyzes the last two sequential reactions in the de novo biosynthetic pathway for UDP-N-acetylglucosamine (UDP-GlcNAc). The C-terminal domain catalyzes the transfer of acetyl group from acetyl coenzyme A to glucosamine-1-phosphate (GlcN-1-P) to produce N-acetylglucosamine-1-phosphate (GlcNAc-1-P), which is converted into UDP-GlcNAc by the transfer of uridine 5-monophosphate (from uridine 5-triphosphate), a reaction catalyzed by the N-terminal domain. The chain is Bifunctional protein GlmU from Streptococcus pyogenes serotype M12 (strain MGAS2096).